The chain runs to 534 residues: CTP synthase (534 aa).

Residues 1 to 265 (MKYIIVTGGV…SNYLLKKLIL (265 aa)) are amidoligase domain. Position 12 (serine 12) interacts with CTP. Position 12 (serine 12) interacts with UTP. 13-18 (GLGKGI) is a binding site for ATP. Position 53 (tyrosine 53) interacts with L-glutamine. Position 70 (aspartate 70) interacts with ATP. Positions 70 and 140 each coordinate Mg(2+). CTP-binding positions include 147–149 (DIE), 186–191 (KTKPTQ), and lysine 222. Residues 186 to 191 (KTKPTQ) and lysine 222 each bind UTP. The 242-residue stretch at 289 to 530 (NVAIVGKYTH…MGAMLKKSKE (242 aa)) folds into the Glutamine amidotransferase type-1 domain. Glycine 352 provides a ligand contact to L-glutamine. The Nucleophile; for glutamine hydrolysis role is filled by cysteine 379. L-glutamine-binding positions include 380–383 (LGMQ), glutamate 403, and arginine 460. Catalysis depends on residues histidine 503 and glutamate 505.

It belongs to the CTP synthase family. Homotetramer.

The enzyme catalyses UTP + L-glutamine + ATP + H2O = CTP + L-glutamate + ADP + phosphate + 2 H(+). It catalyses the reaction L-glutamine + H2O = L-glutamate + NH4(+). The catalysed reaction is UTP + NH4(+) + ATP = CTP + ADP + phosphate + 2 H(+). The protein operates within pyrimidine metabolism; CTP biosynthesis via de novo pathway; CTP from UDP: step 2/2. Allosterically activated by GTP, when glutamine is the substrate; GTP has no effect on the reaction when ammonia is the substrate. The allosteric effector GTP functions by stabilizing the protein conformation that binds the tetrahedral intermediate(s) formed during glutamine hydrolysis. Inhibited by the product CTP, via allosteric rather than competitive inhibition. In terms of biological role, catalyzes the ATP-dependent amination of UTP to CTP with either L-glutamine or ammonia as the source of nitrogen. Regulates intracellular CTP levels through interactions with the four ribonucleotide triphosphates. The chain is CTP synthase from Methanococcoides burtonii (strain DSM 6242 / NBRC 107633 / OCM 468 / ACE-M).